A 505-amino-acid chain; its full sequence is Lysine--tRNA ligase (505 aa).

Mg(2+)-binding residues include Glu415 and Glu422.

Belongs to the class-II aminoacyl-tRNA synthetase family. Homodimer. Mg(2+) is required as a cofactor.

It is found in the cytoplasm. It catalyses the reaction tRNA(Lys) + L-lysine + ATP = L-lysyl-tRNA(Lys) + AMP + diphosphate. The chain is Lysine--tRNA ligase from Serratia proteamaculans (strain 568).